The following is a 356-amino-acid chain: Tyrosine recombinase XerS (356 aa).

Positions Ile16–Thr121 constitute a Core-binding (CB) domain. In terms of domain architecture, Tyr recombinase spans Glu169–Asp354. Active-site residues include Arg210, Lys234, His306, Arg309, and His332. Residue Tyr341 is the O-(3'-phospho-DNA)-tyrosine intermediate of the active site.

The protein belongs to the 'phage' integrase family. XerS subfamily.

It is found in the cytoplasm. With respect to regulation, ftsK is required for recombination. Site-specific tyrosine recombinase, which acts by catalyzing the cutting and rejoining of the recombining DNA molecules. Essential to convert dimers of the bacterial chromosome into monomers to permit their segregation at cell division. The protein is Tyrosine recombinase XerS of Streptococcus agalactiae serotype Ia (strain ATCC 27591 / A909 / CDC SS700).